The sequence spans 270 residues: Hemin import ATP-binding protein HmuV (270 aa).

The 238-residue stretch at 5–242 (LEAEAATYSV…SLINRVFDIE (238 aa)) folds into the ABC transporter domain. Position 37 to 44 (37 to 44 (GPNGAGKS)) interacts with ATP.

Belongs to the ABC transporter superfamily. Heme (hemin) importer (TC 3.A.1.14.5) family. The complex is composed of two ATP-binding proteins (HmuV), two transmembrane proteins (HmuU) and a solute-binding protein (HmuT).

The protein localises to the cell inner membrane. Part of the ABC transporter complex HmuTUV involved in hemin import. Responsible for energy coupling to the transport system. This is Hemin import ATP-binding protein HmuV from Rhodopseudomonas palustris (strain BisA53).